Consider the following 706-residue polypeptide: Probable tape measure protein (706 aa).

The stretch at 9–113 forms a coiled coil; the sequence is QAELETKGVL…TRLSTELAKV (105 aa). 3 consecutive EF-hand domains span residues 271-290, 361-380, and 496-521; these read GSGT…ALGA, KDGQ…GFTS, and KIID…AKDA. Ca(2+) is bound by residues Asp-499, Asn-501, Asp-503, Lys-505, and Glu-510.

It belongs to the Mulikevirus tape measure protein family.

In terms of biological role, serves as a base for tail tube protein polymerization and acts as a template for tail length determination. This is Probable tape measure protein from Lactococcus phage c2.